A 1758-amino-acid polypeptide reads, in one-letter code: MKVSDRRKFEKANFDEFESALNNKNDLVHCPSITLFESIPTEVRSFYEDEKSGLIKVVKFRTGAMDRKRSFEKVVISVMVGKNVKKFLTFVEDEPDFQGGPIPSKYLIPKKINLMVYTLFQVHTLKFNRKDYDTLSLFYLNRGYYNELSFRVLERCHEIASARPNDSSTMRTFTDFVSGAPIVRSLQKSTIRKYGYNLAPYMFLLLHVDELSIFSAYQASLPGEKKVDTERLKRDLCPRKPIEIKYFSQICNDMMNKKDRLGDILHIILRACALNFGAGPRGGAGDEEDRSITNEEPIIPSVDEHGLKVCKLRSPNTPRRLRKTLDAVKALLVSSCACTARDLDIFDDNNGVAMWKWIKILYHEVAQETTLKDSYRITLVPSSDGISLLAFAGPQRNVYVDDTTRRIQLYTDYNKNGSSEPRLKTLDGLTSDYVFYFVTVLRQMQICALGNSYDAFNHDPWMDVVGFEDPNQVTNRDISRIVLYSYMFLNTAKGCLVEYATFRQYMRELPKNAPQKLNFREMRQGLIALGRHCVGSRFETDLYESATSELMANHSVQTGRNIYGVDSFSLTSVSGTTATLLQERASERWIQWLGLESDYHCSFSSTRNAEDVVAGEAASSNHHQKISRVTRKRPREPKSTNDILVAGQKLFGSSFEFRDLHQLRLCYEIYMADTPSVAVQAPPGYGKTELFHLPLIALASKGDVEYVSFLFVPYTVLLANCMIRLGRRGCLNVAPVRNFIEEGYDGVTDLYVGIYDDLASTNFTDRIAAWENIVECTFRTNNVKLGYLIVDEFHNFETEVYRQSQFGGITNLDFDAFEKAIFLSGTAPEAVADAALQRIGLTGLAKKSMDINELKRSEDLSRGLSSYPTRMFNLIKEKSEVPLGHVHKIRKKVESQPEEALKLLLALFESEPESKAIVVASTTNEVEELACSWRKYFRVVWIHGKLGAAEKVSRTKEFVTDGSMQVLIGTKLVTEGIDIKQLMMVIMLDNRLNIIELIQGVGRLRDGGLCYLLSRKNSWAARNRKGELPPIKEGCITEQVREFYGLESKKGKKGQHVGCCGSRTDLSADTVELIERMDRLAEKQATASMSIVALPSSFQESNSSDRYRKYCSSDEDSNTCIHGSANASTNASTNAITTASTNVRTNATTNASTNATTNASTNASTNATTNASTNATTNSSTNATTTASTNVRTSATTTASINVRTSATTTESTNSSTNATTTESTNSSTNATTTESTNSNTSATTTASINVRTSATTTESTNSSTSATTTASINVRTSATTTKSINSSTNATTTESTNSNTNATTTESTNSSTNATTTESTNSSTNATTTESTNSNTSAATTESTNSNTSATTTESTNASAKEDANKDGNAEDNRFHPVTDINKESYKRKGSQMVLLERKKLKAQFPNTSENMNVLQFLGFRSDEIKHLFLYGIDIYFCPEGVFTQYGLCKGCQKMFELCVCWAGQKVSYRRIAWEALAVERMLRNDEEYKEYLEDIEPYHGDPVGYLKYFSVKRREIYSQIQRNYAWYLAITRRRETISVLDSTRGKQGSQVFRMSGRQIKELYFKVWSNLRESKTEVLQYFLNWDEKKCQEEWEAKDDTVVVEALEKGGVFQRLRSMTSAGLQGPQYVKLQFSRHHRQLRSRYELSLGMHLRDQIALGVTPSKVPHWTAFLSMLIGLFYNKTFRQKLEYLLEQISEVWLLPHWLDLANVEVLAADDTRVPLYMLMVAVHKELDSDDVPDGRFDILLCRDSSREVGE.

The Helicase ATP-binding domain maps to 668–845 (EIYMADTPSV…LQRIGLTGLA (178 aa)). 681-688 (APPGYGKT) contributes to the ATP binding site. In terms of domain architecture, Helicase C-terminal spans 900–1051 (ALKLLLALFE…EFYGLESKKG (152 aa)). Low complexity predominate over residues 1142–1360 (NVRTNATTNA…ATTTESTNAS (219 aa)). Residues 1142 to 1384 (NVRTNATTNA…RFHPVTDINK (243 aa)) are disordered. Over residues 1361-1384 (AKEDANKDGNAEDNRFHPVTDINK) the composition is skewed to basic and acidic residues.

The protein belongs to the helicase family. Yeast subtelomeric Y' repeat subfamily.

Catalyzes DNA unwinding and is involved in telomerase-independent telomere maintenance. This chain is Y' element ATP-dependent helicase YJL225C, found in Saccharomyces cerevisiae (strain ATCC 204508 / S288c) (Baker's yeast).